An 853-amino-acid chain; its full sequence is DNA (cytosine-5)-methyltransferase 3B (853 aa).

Positions 1–20 (MKGDTRHLNGEEDAGGREDS) are enriched in basic and acidic residues. The segment at 1–218 (MKGDTRHLNG…SGDGDSSEYQ (218 aa)) is disordered. Positions 1–298 (MKGDTRHLNG…LATFNKLVSY (298 aa)) are interaction with DNMT1 and DNMT3A. The segment covering 72-81 (GDGDGEDGDG) has biased composition (acidic residues). The residue at position 82 (Ser-82) is a Phosphoserine. A Glycyl lysine isopeptide (Lys-Gly) (interchain with G-Cter in SUMO2) cross-link involves residue Lys-89. Phosphothreonine is present on Thr-96. Residues Ser-100 and Ser-110 each carry the phosphoserine modification. Residues 115-130 (ERHRPSPRSTRGRQGR) are compositionally biased toward basic residues. Phosphoserine occurs at positions 136, 195, 202, and 209. Polar residues predominate over residues 179-199 (GTPQSSSTPYARLAQDSQQGG). The region spanning 225 to 283 (IGDLVWGKIKGFSWWPAMVVSWKATSKRQAMSGMRWVQWFGDGKFSEVSADKLVALGLF) is the PWWP domain. The segment at 341–423 (KPTGIEGLKP…DQSREQMASD (83 aa)) is disordered. 2 stretches are compositionally biased toward basic and acidic residues: residues 368–385 (RKLESRKYENKTRRRTAD) and 407–417 (GKDRGDEDQSR). At Arg-410 the chain carries Citrulline. Residues 423–555 (DVANNKSSLE…LQAFFTSDTG (133 aa)) form the ADD domain. The GATA-type; atypical zinc-finger motif lies at 434-464 (GCLSCGRKNPVSFHPLFEGGLCQTCRDRFLE). Residues 435–527 (CLSCGRKNPV…LQEPWSCYMC (93 aa)) are interaction with the PRC2/EED-EZH2 complex. The segment at 475 to 531 (QSYCTVCCEGRELLLCSNTSCCRCFCVECLEVLVGTGTAAEAKLQEPWSCYMCLPQR) adopts a PHD-type; atypical zinc-finger fold. In terms of domain architecture, SAM-dependent MTase C5-type spans 575-853 (IRVLSLFDGI…APLKDYFACE (279 aa)). S-adenosyl-L-methionine-binding positions include 582–586 (DGIAT) and Glu-605. Lys-617 is covalently cross-linked (Glycyl lysine isopeptide (Lys-Gly) (interchain with G-Cter in SUMO2)). S-adenosyl-L-methionine is bound at residue 627–629 (DVR). Residue Cys-651 is part of the active site. 832–834 (RSW) contacts S-adenosyl-L-methionine.

Belongs to the class I-like SAM-binding methyltransferase superfamily. C5-methyltransferase family. Interacts with BAZ2A/TIP5, SUV39H1 and CBX4. Interacts with UHRF1. Interacts with DNMT1 and DNMT3A, SETDB1, UBL1, UBE2I9 and ZHX1. Interacts with the PRC2/EED-EZH2 complex. Post-translationally, sumoylated. Citrullinated by PADI4. As to expression, ubiquitous; highly expressed in fetal liver, heart, kidney, placenta, and at lower levels in spleen, colon, brain, liver, small intestine, lung, peripheral blood mononuclear cells, and skeletal muscle. Isoform 1 is expressed in all tissues except brain, skeletal muscle and PBMC, 3 is ubiquitous, 4 is expressed in all tissues except brain, skeletal muscle, lung and prostate and 5 is detectable only in testis and at very low level in brain and prostate.

It localises to the nucleus. It catalyses the reaction a 2'-deoxycytidine in DNA + S-adenosyl-L-methionine = a 5-methyl-2'-deoxycytidine in DNA + S-adenosyl-L-homocysteine + H(+). Activated by binding to the regulatory factor DNMT3L. Functionally, required for genome-wide de novo methylation and is essential for the establishment of DNA methylation patterns during development. DNA methylation is coordinated with methylation of histones. May preferentially methylates nucleosomal DNA within the nucleosome core region. May function as transcriptional co-repressor by associating with CBX4 and independently of DNA methylation. Seems to be involved in gene silencing. In association with DNMT1 and via the recruitment of CTCFL/BORIS, involved in activation of BAG1 gene expression by modulating dimethylation of promoter histone H3 at H3K4 and H3K9. Isoforms 4 and 5 are probably not functional due to the deletion of two conserved methyltransferase motifs. Functions as a transcriptional corepressor by associating with ZHX1. Required for DUX4 silencing in somatic cells. This chain is DNA (cytosine-5)-methyltransferase 3B (DNMT3B), found in Homo sapiens (Human).